A 412-amino-acid polypeptide reads, in one-letter code: Histone-lysine N-methyltransferase SUV39H1 (412 aa).

An interaction with SIRT1 region spans residues methionine 1–phenylalanine 89. The Chromo domain maps to phenylalanine 43–histidine 101. The 62-residue stretch at valine 179–glycine 240 folds into the Pre-SET domain. Residues cysteine 181, cysteine 183, cysteine 186, cysteine 194, cysteine 195, cysteine 222, cysteine 226, cysteine 228, and cysteine 232 each contribute to the Zn(2+) site. The 124-residue stretch at tyrosine 243–asparagine 366 folds into the SET domain. Residue arginine 254–tryptophan 256 coordinates S-adenosyl-L-methionine. The mediates interaction with MECOM stretch occupies residues glycine 255–threonine 377. Lysine 266 bears the N6-acetyllysine mark. Residues tyrosine 297 and asparagine 323 to histidine 324 contribute to the S-adenosyl-L-methionine site. Cysteine 326 is a binding site for Zn(2+). Serine 391 carries the post-translational modification Phosphoserine. The Post-SET domain maps to valine 396–phenylalanine 412. 3 residues coordinate Zn(2+): cysteine 400, cysteine 402, and cysteine 407.

It belongs to the class V-like SAM-binding methyltransferase superfamily. Histone-lysine methyltransferase family. Suvar3-9 subfamily. As to quaternary structure, interacts with H3 and H4 histones. Interacts with GFI1B, DNMT3B, CBX1, CBX4, CCAR2, MBD1, RUNX1, RUNX3, MYOD1, SMAD5 and RB1. Interacts with SBF1 through the SET domain. Interacts with HDAC1 and HDAC2 through the N-terminus and associates with the core histone deacetylase complex composed of HDAC1, HDAC2, RBBP4 and RBBP7. Component of the eNoSC complex, composed of SIRT1, SUV39H1 and RRP8. Interacts (via SET domain) with MECOM; enhances MECOM transcriptional repression activity. Interacts with LMNA; the interaction increases stability of SUV39H1. The large PER complex involved in the histone methylation is composed of at least PER2, CBX3, TRIM28, SUV39H1 and/or SUV39H2; CBX3 mediates the formation of the complex. In terms of assembly, (Microbial infection) Interacts with HTLV-1 Tax protein, leading to abrogate Tax transactivation of HTLV-1 LTR. In terms of processing, phosphorylated on serine residues, and to a lesser degree, on threonine residues. The phosphorylated form is stabilized by SBF1 and is less active in its transcriptional repressor function. Ubiquitinated by the DCX(DCAF13) E3 ubiquitin ligase complex, leading to its degradation. Post-translationally, acetylated at Lys-266, leading to inhibition of enzyme activity. SIRT1-mediated deacetylation relieves this inhibition. In terms of processing, (Microbial infection) A higher molecular weight form is also seen in M.bovis infected cells.

The protein resides in the nucleus. The protein localises to the nucleus lamina. It localises to the nucleoplasm. It is found in the chromosome. Its subcellular location is the centromere. The protein resides in the cytoplasmic vesicle. The protein localises to the phagosome lumen. It localises to the cell membrane. The enzyme catalyses L-lysyl(9)-[histone H3] + 3 S-adenosyl-L-methionine = N(6),N(6),N(6)-trimethyl-L-lysyl(9)-[histone H3] + 3 S-adenosyl-L-homocysteine + 3 H(+). Inhibited by S-adenosyl-L-homocysteine. Negatively regulated by CCAR2. Its function is as follows. Histone methyltransferase that specifically trimethylates 'Lys-9' of histone H3 using monomethylated H3 'Lys-9' as substrate. Also weakly methylates histone H1 (in vitro). H3 'Lys-9' trimethylation represents a specific tag for epigenetic transcriptional repression by recruiting HP1 (CBX1, CBX3 and/or CBX5) proteins to methylated histones. Mainly functions in heterochromatin regions, thereby playing a central role in the establishment of constitutive heterochromatin at pericentric and telomere regions. H3 'Lys-9' trimethylation is also required to direct DNA methylation at pericentric repeats. SUV39H1 is targeted to histone H3 via its interaction with RB1 and is involved in many processes, such as repression of MYOD1-stimulated differentiation, regulation of the control switch for exiting the cell cycle and entering differentiation, repression by the PML-RARA fusion protein, BMP-induced repression, repression of switch recombination to IgA and regulation of telomere length. Component of the eNoSC (energy-dependent nucleolar silencing) complex, a complex that mediates silencing of rDNA in response to intracellular energy status and acts by recruiting histone-modifying enzymes. The eNoSC complex is able to sense the energy status of cell: upon glucose starvation, elevation of NAD(+)/NADP(+) ratio activates SIRT1, leading to histone H3 deacetylation followed by dimethylation of H3 at 'Lys-9' (H3K9me2) by SUV39H1 and the formation of silent chromatin in the rDNA locus. Recruited by the large PER complex to the E-box elements of the circadian target genes such as PER2 itself or PER1, contributes to the conversion of local chromatin to a heterochromatin-like repressive state through H3 'Lys-9' trimethylation. Functionally, (Microbial infection) Plays a role in defense against mycobacterial infections. Methylates M.tuberculosis HupB on 'Lys-140', probably methylates HupB of M.bovis also. Methylation has an inhibitory effect on mycobacterial growth in the host. Macrophages expressing about 60% SUV39H1 are slightly more susceptible to M.bovis or M.tuberculosis infection. Chaetocin (an inhibitor of this enzyme) increases macrophage survival of M.tuberculosis. This protein inhibits biofilm formation by M.tuberculosis via 'Lys-140' trimethylation. The polypeptide is Histone-lysine N-methyltransferase SUV39H1 (SUV39H1) (Homo sapiens (Human)).